The primary structure comprises 274 residues: Large ribosomal subunit protein uL2cz/uL2cy (274 aa).

Disordered regions lie at residues 1-25 (MAIH…VKSN) and 223-274 (MNPV…RRTK).

Belongs to the universal ribosomal protein uL2 family. In terms of assembly, part of the 50S ribosomal subunit.

The protein resides in the plastid. It localises to the chloroplast. The sequence is that of Large ribosomal subunit protein uL2cz/uL2cy (rpl2-A) from Citrus sinensis (Sweet orange).